The primary structure comprises 1600 residues: Eukaryotic translation initiation factor 4 gamma 1 (1600 aa).

A disordered region spans residues 1-88 (MNKAPQPTGP…ARPGPAPHVY (88 aa)). Pro residues predominate over residues 7–24 (PTGPPPARSPGLPQPAFP). Serine 15 bears the Phosphoserine mark. A compositionally biased stretch (polar residues) spans 34 to 48 (STPQATQMNTPSQPR). The segment covering 60 to 79 (PSRAQPPSSAASRVQSAAPA) has biased composition (low complexity). 2 positions are modified to omega-N-methylarginine: arginine 80 and arginine 117. Disordered regions lie at residues 173 to 230 (NQPP…NGES), 243 to 326 (SQGA…LSPE), 366 to 501 (ETHE…QLSQ), 507 to 526 (AATQ…KELN), and 541 to 606 (VDPA…DQWK). The PABPC1-binding stretch occupies residues 179-207 (APKRERKTIRIRDPNQGGKDITEEIMSGA). The segment covering 208–220 (RTASTPTPPQTGG) has biased composition (polar residues). Residue threonine 214 is modified to Phosphothreonine. Serine 230 is subject to Phosphoserine. Positions 269 to 280 (SPSPTPSPPPIL) are enriched in pro residues. Residue serine 324 is modified to Phosphoserine. A compositionally biased stretch (low complexity) spans 438-449 (KVSSAALASILS). The span at 463–479 (QEEEMEEDDDDEEGGEA) shows a compositional bias: acidic residues. Polar residues predominate over residues 551 to 562 (QPPTGSNPSPES). Composition is skewed to basic and acidic residues over residues 578-587 (WDSKEDKIHN) and 596-606 (QKYEYKSDQWK). An N6-acetyllysine modification is found at lysine 606. The interval 611–622 (EEKKRYDREFLL) is EIF4E-binding. The residue at position 651 (threonine 651) is a Phosphothreonine. Disordered regions lie at residues 667-719 (GPDF…TRKI) and 734-760 (AEKA…DGSK). The segment at 686 to 1089 (GPPRGGPGGE…GSIDSNNQLF (404 aa)) is eIF3/EIF4A-binding. Omega-N-methylarginine is present on residues arginine 689 and arginine 698. The segment covering 697-707 (PRGPAGLGPRR) has biased composition (low complexity). The segment covering 745–760 (TAADKDRGEEDADGSK) has biased composition (basic and acidic residues). Residues 765 to 993 (FRRVRSILNK…QDVLDLRQSN (229 aa)) enclose the MIF4G domain. Disordered stretches follow at residues 1029 to 1117 (AKGS…SEAT) and 1129 to 1238 (QQTL…AALS). Serine 1032 is subject to Phosphoserine. An omega-N-methylarginine mark is found at arginine 1036 and arginine 1046. Residues serine 1081 and serine 1096 each carry the phosphoserine modification. Lysine 1099 bears the N6-acetyllysine mark. Serine 1147 and serine 1149 each carry phosphoserine. The span at 1148-1180 (LSRERGEKAGDRGDRLERSERGGDRGDRLDRAR) shows a compositional bias: basic and acidic residues. Residue serine 1187 is modified to Phosphoserine; by PKC/PRKCA. The span at 1188-1225 (FSKEVEERSRERPSQPEGLRKAASLTEDRGRDPVKREA) shows a compositional bias: basic and acidic residues. Phosphoserine occurs at positions 1189, 1196, and 1211. Position 1213 is a phosphothreonine (threonine 1213). Residues serine 1231 and serine 1238 each carry the phosphoserine modification. In terms of domain architecture, MI spans 1241–1363 (EVEKKSKAII…PMGELFREIT (123 aa)). Residues 1429–1599 (ESEAPGQRTL…REAEDEESDH (171 aa)) enclose the W2 domain. The EIF4A-binding stretch occupies residues 1450–1600 (LLKDGGSNQR…EAEDEESDHN (151 aa)). The tract at residues 1585-1600 (FFNWLREAEDEESDHN) is necessary but not sufficient for MKNK1-binding. Position 1597 is a phosphoserine (serine 1597).

This sequence belongs to the eukaryotic initiation factor 4G family. EIF4F is a multi-subunit complex, the composition of which varies with external and internal environmental conditions. It is composed of at least EIF4A, EIF4E (cap-binding) and EIF4G1/EIF4G3. Interacts with eIF3 complex, mutually exclusive with EIF4A1 or EIF4A2, EIF4E and through its N-terminus with PABPC1. Interacts with EIF4E or with EIF1 (mutually exclusive) through a common binding site. Interacts through its C-terminus with the serine/threonine kinases MKNK1, and with MKNK2. Appears to act as a scaffold protein, holding these enzymes in place to phosphorylate EIF4E. Non-phosphorylated EIF4EBP1 competes with EIF4G1/EIF4G3 to interact with EIF4E; insulin stimulated MAP-kinase (MAPK1 and MAPK3) phosphorylation of EIF4EBP1 causes dissociation of the complex allowing EIF4G1/EIF4G3 to bind and consequent initiation of translation. EIF4G1/EIF4G3 interacts with PABPC1 to bring about circularization of the mRNA. Interacts with EIF4E3. Interacts with CIRBP and MIF4GD. Interacts with RBM4. Interacts with HNRNPD/AUF1; the interaction requires RNA. Interacts with DDX3X; the interaction requires RNA. Interacts with DAZAP2. In terms of assembly, (Microbial infection) Interacts with murine norovirus viral genome-linked protein (via C-terminus); this interaction plays a role in translation of viral proteins. Post-translationally, phosphorylated at multiple sites in vivo. Phosphorylation at Ser-1187 by PRKCA induces binding to MKNK1.

The protein resides in the cytoplasm. The protein localises to the nucleus. It localises to the stress granule. In terms of biological role, component of the protein complex eIF4F, which is involved in the recognition of the mRNA cap, ATP-dependent unwinding of 5'-terminal secondary structure and recruitment of mRNA to the ribosome. Exists in two complexes, either with EIF1 or with EIF4E (mutually exclusive). Together with EIF1, is required for leaky scanning, in particular for avoiding cap-proximal start codon. Together with EIF4E, antagonizes the scanning promoted by EIF1-EIF4G1 and locates the start codon (through a TISU element) without scanning. As a member of the eIF4F complex, required for endoplasmic reticulum stress-induced ATF4 mRNA translation. The polypeptide is Eukaryotic translation initiation factor 4 gamma 1 (Eif4g1) (Mus musculus (Mouse)).